The following is a 410-amino-acid chain: UDP-N-acetylglucosamine--N-acetylmuramyl-(pentapeptide) pyrophosphoryl-undecaprenol N-acetylglucosamine transferase (410 aa).

Residues 1 to 34 are disordered; it reads MKDTVSQPAGGRGATAPRPADAASPSCGSSPSAD. Residues 14-34 are compositionally biased toward low complexity; that stretch reads ATAPRPADAASPSCGSSPSAD. UDP-N-acetyl-alpha-D-glucosamine is bound by residues 45 to 47, Asn-167, Arg-204, Ser-238, and Gln-334; that span reads TAG.

Belongs to the glycosyltransferase 28 family. MurG subfamily.

The protein localises to the cell membrane. It carries out the reaction di-trans,octa-cis-undecaprenyl diphospho-N-acetyl-alpha-D-muramoyl-L-alanyl-D-glutamyl-meso-2,6-diaminopimeloyl-D-alanyl-D-alanine + UDP-N-acetyl-alpha-D-glucosamine = di-trans,octa-cis-undecaprenyl diphospho-[N-acetyl-alpha-D-glucosaminyl-(1-&gt;4)]-N-acetyl-alpha-D-muramoyl-L-alanyl-D-glutamyl-meso-2,6-diaminopimeloyl-D-alanyl-D-alanine + UDP + H(+). It functions in the pathway cell wall biogenesis; peptidoglycan biosynthesis. Functionally, cell wall formation. Catalyzes the transfer of a GlcNAc subunit on undecaprenyl-pyrophosphoryl-MurNAc-pentapeptide (lipid intermediate I) to form undecaprenyl-pyrophosphoryl-MurNAc-(pentapeptide)GlcNAc (lipid intermediate II). This chain is UDP-N-acetylglucosamine--N-acetylmuramyl-(pentapeptide) pyrophosphoryl-undecaprenol N-acetylglucosamine transferase, found in Mycobacterium bovis (strain ATCC BAA-935 / AF2122/97).